We begin with the raw amino-acid sequence, 245 residues long: Putative insertion sequence ATP-binding protein y4pL (245 aa).

106–113 is an ATP binding site; sequence GPSGVGKS.

This sequence belongs to the IS21/IS1162 putative ATP-binding protein family.

In Sinorhizobium fredii (strain NBRC 101917 / NGR234), this protein is Putative insertion sequence ATP-binding protein y4pL.